Here is a 561-residue protein sequence, read N- to C-terminus: Hemolysin transporter protein HpmB (561 aa).

An N-terminal signal peptide occupies residues 1-17; the sequence is MKKKVVLLTLLSCFSTS. The POTRA domain occupies 77-150; the sequence is LPIKGVYIQG…GELGLYAIEG (74 aa).

Belongs to the TPS (TC 1.B.20) family.

It localises to the cell outer membrane. Functionally, interacts with the cell-bound hemolysin. Necessary for the extracellular secretion and activation of the hemolysin. Probable member of a two partner secretion pathway (TPS) in which it mediates the secretion of hemolysin. The chain is Hemolysin transporter protein HpmB (hpmB) from Proteus mirabilis.